The following is a 240-amino-acid chain: Probable transcriptional regulatory protein VFMJ11_A0186 (240 aa).

Belongs to the TACO1 family.

It is found in the cytoplasm. The sequence is that of Probable transcriptional regulatory protein VFMJ11_A0186 from Aliivibrio fischeri (strain MJ11) (Vibrio fischeri).